We begin with the raw amino-acid sequence, 75 residues long: Phytosulfokines (75 aa).

The first 22 residues, 1-22 (MSSKAITLLLIALLFSLSLAQA), serve as a signal peptide directing secretion. A propeptide spanning residues 23-66 (ARPLQPADSTKSVHVIPEKVHDEACEGVGEEECLMRRTLTAHVD) is cleaved from the precursor. Sulfotyrosine is present on residues tyrosine 67 and tyrosine 69. Residues 72 to 75 (DHNP) constitute a propeptide that is removed on maturation.

Belongs to the phytosulfokine family. In terms of processing, sulfation is important for activity and for the binding to a putative membrane receptor. Deletion of the sulfate groups of Tyr-67 and Tyr-69 resulted in compounds with respectively 0.6% and 4% of the activity. PSK-alpha is produced by endopeptidase digestion. PSK-beta is produced from PSK-alpha by exopeptidase digestion.

It is found in the secreted. Functionally, promotes plant cell differentiation, organogenesis and somatic embryogenesis as well as cell proliferation. The chain is Phytosulfokines (PSK) from Asparagus officinalis (Garden asparagus).